A 655-amino-acid polypeptide reads, in one-letter code: MGKVIGIDLGTTNSCVAVLEGGKPIIVTNREGDRTTPSIVAVGRKGDRIVGRMAKRQAVTNAENTVYSIKRFIGRRWEDTEAERSRVTYTCVPGKDDTVNVTIRDRVCTPQEISAMVLQKLRQDAETFLGEPVTQAVITVPAYFTDAQRQATKDAGAIAGLEVLRIVNEPTAAALSYGLDKLHENSRILVFDLGGSTLDVSILQLGDSVFEVKATAGNNHLGGDDFDAVIVDWLADNFLKAESIDLRQDKMAIQRLREASEQAKIDLSTLPTTTINLPFIATATVDGAPEPKHIEVELQREQFEVLASNLVQATIEPIQQALKDSNLTIDQIDRILLVGGSSRIPAIQQAVQKFFGGKTPDLTINPDEAIALGAAIQAGVLGGEVKDVLLLDVIPLSLGLETLGGVFTKIIERNTTIPTSRTQVFTTATDGQVMVEVHVLQGERALVKDNKSLGRFQLTGIPPAPRGVPQIELAFDIDADGILNVSARDRGTGRAQGIRITSTGGLTSDEIEAMRRDAELYQEADQINLQMIELRTQFENLRYSFESTLQNNRELLTAEQQEPLEASLNALASGLESVSNEAELNQLRQQLEALKQQLYAIGAAAYRQDGSVTTIPVQPTFADLIGDNDNGSNETVAIERNDDDATVTADYEAIE.

T197 bears the Phosphothreonine; by autocatalysis mark.

This sequence belongs to the heat shock protein 70 family.

Acts as a chaperone. The sequence is that of Chaperone protein dnaK1 (dnaK1) from Synechococcus elongatus (strain ATCC 33912 / PCC 7942 / FACHB-805) (Anacystis nidulans R2).